Reading from the N-terminus, the 189-residue chain is Holliday junction branch migration complex subunit RuvA (189 aa).

The domain I stretch occupies residues 1–62 (MIVALKGNIE…EEAWSLYGFA (62 aa)). The segment at 63-138 (EEAEKRVFDT…FSLSLQEGSK (76 aa)) is domain II. The tract at residues 138 to 139 (KA) is flexible linker. The tract at residues 140–189 (STPPVFEESRLALESLGFKSELIAKALQNIQATTTQEIIKEALKKLQTLR) is domain III.

Belongs to the RuvA family. As to quaternary structure, homotetramer. Forms an RuvA(8)-RuvB(12)-Holliday junction (HJ) complex. HJ DNA is sandwiched between 2 RuvA tetramers; dsDNA enters through RuvA and exits via RuvB. An RuvB hexamer assembles on each DNA strand where it exits the tetramer. Each RuvB hexamer is contacted by two RuvA subunits (via domain III) on 2 adjacent RuvB subunits; this complex drives branch migration. In the full resolvosome a probable DNA-RuvA(4)-RuvB(12)-RuvC(2) complex forms which resolves the HJ.

The protein resides in the cytoplasm. The RuvA-RuvB-RuvC complex processes Holliday junction (HJ) DNA during genetic recombination and DNA repair, while the RuvA-RuvB complex plays an important role in the rescue of blocked DNA replication forks via replication fork reversal (RFR). RuvA specifically binds to HJ cruciform DNA, conferring on it an open structure. The RuvB hexamer acts as an ATP-dependent pump, pulling dsDNA into and through the RuvAB complex. HJ branch migration allows RuvC to scan DNA until it finds its consensus sequence, where it cleaves and resolves the cruciform DNA. This is Holliday junction branch migration complex subunit RuvA from Wolinella succinogenes (strain ATCC 29543 / DSM 1740 / CCUG 13145 / JCM 31913 / LMG 7466 / NCTC 11488 / FDC 602W) (Vibrio succinogenes).